A 69-amino-acid polypeptide reads, in one-letter code: Conotoxin LvVID (69 aa).

Positions 1–17 are cleaved as a signal peptide; that stretch reads VLIIAVLFLTACQLTTA. Residues 18–40 constitute a propeptide that is removed on maturation; that stretch reads ETYPRGQQRHHALRSTDKNSKLT. Cystine bridges form between cysteine 43-cysteine 57, cysteine 50-cysteine 61, and cysteine 56-cysteine 68.

It belongs to the conotoxin O1 superfamily. Expressed by the venom duct.

The protein localises to the secreted. This Conus lividus (Livid cone) protein is Conotoxin LvVID.